The following is a 417-amino-acid chain: UDP-N-acetylglucosamine 1-carboxyvinyltransferase (417 aa).

A phosphoenolpyruvate-binding site is contributed by 22–23 (KN). Arg-92 is a binding site for UDP-N-acetyl-alpha-D-glucosamine. Cys-116 acts as the Proton donor in catalysis. 2-(S-cysteinyl)pyruvic acid O-phosphothioketal is present on Cys-116. Residues 161-164 (KVSV), Asp-305, and Ile-327 contribute to the UDP-N-acetyl-alpha-D-glucosamine site.

The protein belongs to the EPSP synthase family. MurA subfamily.

It is found in the cytoplasm. It carries out the reaction phosphoenolpyruvate + UDP-N-acetyl-alpha-D-glucosamine = UDP-N-acetyl-3-O-(1-carboxyvinyl)-alpha-D-glucosamine + phosphate. Its pathway is cell wall biogenesis; peptidoglycan biosynthesis. In terms of biological role, cell wall formation. Adds enolpyruvyl to UDP-N-acetylglucosamine. The chain is UDP-N-acetylglucosamine 1-carboxyvinyltransferase from Pelagibacter ubique (strain HTCC1062).